The following is a 228-amino-acid chain: Thrombin-like enzyme gyroxin analog (228 aa).

Residues 1-222 form the Peptidase S1 domain; it reads VIGGDECNIN…YLDWIQSVIA (222 aa). Cystine bridges form between Cys-7/Cys-138, Cys-28/Cys-44, Cys-78/Cys-227, Cys-117/Cys-183, Cys-149/Cys-162, and Cys-173/Cys-198. Catalysis depends on His-43, which acts as the Charge relay system. 2 N-linked (GlcNAc...) asparagine glycosylation sites follow: Asn-45 and Asn-81. Catalysis depends on Asp-88, which acts as the Charge relay system. N-linked (GlcNAc...) asparagine glycosylation occurs at Asn-145. The active-site Charge relay system is the Ser-177. Asn-224 is a glycosylation site (N-linked (GlcNAc...) asparagine).

Belongs to the peptidase S1 family. Snake venom subfamily. Monomer. In terms of tissue distribution, expressed by the venom gland.

Its subcellular location is the secreted. It catalyses the reaction Selective cleavage of Arg-|-Xaa bond in fibrinogen, to form fibrin, and release fibrinopeptide A. The specificity of further degradation of fibrinogen varies with species origin of the enzyme.. With respect to regulation, inhibited competitively by amidines and guanidines, and irreversibly inhibited by diisopropylfluorophosphate. Its function is as follows. Thrombin-like snake venom serine protease, that cleaves alpha-chain of fibrinogen (FGA) releases only fibrinopeptide A. Shows coagulant, esterase and amidase activities. Induces the barrel rotation syndrome in mice, which is manifested by gyroxin-like, rapid rolling motions. May also reversibly increase the permeability of the blood brain barrier (BBB) in mice. The chain is Thrombin-like enzyme gyroxin analog from Lachesis muta muta (Bushmaster).